The primary structure comprises 401 residues: S-adenosylmethionine synthase (401 aa).

H16 contacts ATP. D18 serves as a coordination point for Mg(2+). Residue E44 coordinates K(+). 2 residues coordinate L-methionine: E57 and Q100. The flexible loop stretch occupies residues 100–110 (QSPDIAQGVNE). Residues 174–176 (DAK), 241–242 (RF), D250, 256–257 (RK), A273, and K277 each bind ATP. D250 serves as a coordination point for L-methionine. An L-methionine-binding site is contributed by K281.

This sequence belongs to the AdoMet synthase family. In terms of assembly, homotetramer; dimer of dimers. The cofactor is Mg(2+). It depends on K(+) as a cofactor.

It localises to the cytoplasm. It catalyses the reaction L-methionine + ATP + H2O = S-adenosyl-L-methionine + phosphate + diphosphate. Its pathway is amino-acid biosynthesis; S-adenosyl-L-methionine biosynthesis; S-adenosyl-L-methionine from L-methionine: step 1/1. Functionally, catalyzes the formation of S-adenosylmethionine (AdoMet) from methionine and ATP. The overall synthetic reaction is composed of two sequential steps, AdoMet formation and the subsequent tripolyphosphate hydrolysis which occurs prior to release of AdoMet from the enzyme. This Streptococcus equi subsp. zooepidemicus (strain H70) protein is S-adenosylmethionine synthase.